The chain runs to 311 residues: Ribosomal RNA small subunit methyltransferase H (311 aa).

S-adenosyl-L-methionine-binding positions include 33–35 (GGH), Asp-51, Phe-78, Asp-99, and Gln-106. The tract at residues 289-311 (EEIEKNRRAHSAKLRAAEKLSFA) is disordered.

It belongs to the methyltransferase superfamily. RsmH family.

Its subcellular location is the cytoplasm. The enzyme catalyses cytidine(1402) in 16S rRNA + S-adenosyl-L-methionine = N(4)-methylcytidine(1402) in 16S rRNA + S-adenosyl-L-homocysteine + H(+). Its function is as follows. Specifically methylates the N4 position of cytidine in position 1402 (C1402) of 16S rRNA. This Carboxydothermus hydrogenoformans (strain ATCC BAA-161 / DSM 6008 / Z-2901) protein is Ribosomal RNA small subunit methyltransferase H.